We begin with the raw amino-acid sequence, 519 residues long: Light-independent protochlorophyllide reductase subunit B (519 aa).

Asp36 is a binding site for [4Fe-4S] cluster. Asp274 serves as the catalytic Proton donor. 409-410 (GL) serves as a coordination point for substrate. The interval 426 to 465 (DEAGPSHHGGHSPKPSEAARTPDKVEERADPAPEAPQTGS) is disordered. Residues 445–456 (RTPDKVEERADP) show a composition bias toward basic and acidic residues.

This sequence belongs to the ChlB/BchB/BchZ family. Protochlorophyllide reductase is composed of three subunits; BchL, BchN and BchB. Forms a heterotetramer of two BchB and two BchN subunits. The cofactor is [4Fe-4S] cluster.

It carries out the reaction chlorophyllide a + oxidized 2[4Fe-4S]-[ferredoxin] + 2 ADP + 2 phosphate = protochlorophyllide a + reduced 2[4Fe-4S]-[ferredoxin] + 2 ATP + 2 H2O. The protein operates within porphyrin-containing compound metabolism; bacteriochlorophyll biosynthesis (light-independent). Its function is as follows. Component of the dark-operative protochlorophyllide reductase (DPOR) that uses Mg-ATP and reduced ferredoxin to reduce ring D of protochlorophyllide (Pchlide) to form chlorophyllide a (Chlide). This reaction is light-independent. The NB-protein (BchN-BchB) is the catalytic component of the complex. This chain is Light-independent protochlorophyllide reductase subunit B, found in Jannaschia sp. (strain CCS1).